The primary structure comprises 691 residues: Serotransferrin-2 (691 aa).

Residues 1 to 18 (MKLLLLSALLGCLATAYA) form the signal peptide. 2 Transferrin-like domains span residues 25–329 (VKWC…SLKK) and 340–670 (IKWC…SLRK). A disulfide bridge links C28 with C50. Positions 74 and 104 each coordinate Fe(3+). Intrachain disulfides connect C127-C207, C172-C186, and C235-C249. Residues T129, S134, G136, and W137 each contribute to the hydrogencarbonate site. N-linked (GlcNAc...) asparagine glycosylation is present at N169. A Fe(3+)-binding site is contributed by Y201. H257 contacts Fe(3+). Cystine bridges form between C343-C379 and C353-C370. Residues D394 and Y428 each coordinate Fe(3+). 7 disulfide bridges follow: C404–C682, C419–C643, C451–C530, C475–C671, C485–C499, C496–C513, and C570–C584. Residues T453, R457, A459, and G460 each coordinate hydrogencarbonate. Y524 provides a ligand contact to Fe(3+). H592 lines the Fe(3+) pocket.

Belongs to the transferrin family. As to quaternary structure, monomer. In terms of tissue distribution, abundant in liver and serum with smaller amounts found in the stomach and kidney.

It localises to the secreted. Transferrins are iron binding transport proteins which can bind two Fe(3+) ions in association with the binding of an anion, usually bicarbonate. It is responsible for the transport of iron from sites of absorption and heme degradation to those of storage and utilization. Serum transferrin may also have a further role in stimulating cell proliferation. The protein is Serotransferrin-2 (tf2) of Salmo salar (Atlantic salmon).